The chain runs to 434 residues: Methylenetetrahydrofolate--tRNA-(uracil-5-)-methyltransferase TrmFO (434 aa).

10-15 (GAGLAG) is an FAD binding site.

Belongs to the MnmG family. TrmFO subfamily. FAD is required as a cofactor.

The protein resides in the cytoplasm. The catalysed reaction is uridine(54) in tRNA + (6R)-5,10-methylene-5,6,7,8-tetrahydrofolate + NADH + H(+) = 5-methyluridine(54) in tRNA + (6S)-5,6,7,8-tetrahydrofolate + NAD(+). It carries out the reaction uridine(54) in tRNA + (6R)-5,10-methylene-5,6,7,8-tetrahydrofolate + NADPH + H(+) = 5-methyluridine(54) in tRNA + (6S)-5,6,7,8-tetrahydrofolate + NADP(+). In terms of biological role, catalyzes the folate-dependent formation of 5-methyl-uridine at position 54 (M-5-U54) in all tRNAs. The protein is Methylenetetrahydrofolate--tRNA-(uracil-5-)-methyltransferase TrmFO of Bacillus cereus (strain ATCC 14579 / DSM 31 / CCUG 7414 / JCM 2152 / NBRC 15305 / NCIMB 9373 / NCTC 2599 / NRRL B-3711).